The sequence spans 237 residues: Uridylate kinase (237 aa).

An ATP-binding site is contributed by Lys12–Gly15. Residues Gly20–Gly25 are involved in allosteric activation by GTP. Gly54 lines the UMP pocket. 2 residues coordinate ATP: Gly55 and Arg59. Residues Asp72 and Thr133–Thr140 each bind UMP. ATP-binding residues include Tyr166 and Asp169.

The protein belongs to the UMP kinase family. In terms of assembly, homohexamer.

It localises to the cytoplasm. The enzyme catalyses UMP + ATP = UDP + ADP. It functions in the pathway pyrimidine metabolism; CTP biosynthesis via de novo pathway; UDP from UMP (UMPK route): step 1/1. Its activity is regulated as follows. Allosterically activated by GTP. Inhibited by UTP. Its function is as follows. Catalyzes the reversible phosphorylation of UMP to UDP. In Clostridium perfringens (strain ATCC 13124 / DSM 756 / JCM 1290 / NCIMB 6125 / NCTC 8237 / Type A), this protein is Uridylate kinase.